The primary structure comprises 279 residues: Putative pyruvate, phosphate dikinase regulatory protein (279 aa).

Position 156-163 (156-163) interacts with ADP; that stretch reads GISRVGKT.

Belongs to the pyruvate, phosphate/water dikinase regulatory protein family. PDRP subfamily.

It catalyses the reaction N(tele)-phospho-L-histidyl/L-threonyl-[pyruvate, phosphate dikinase] + ADP = N(tele)-phospho-L-histidyl/O-phospho-L-threonyl-[pyruvate, phosphate dikinase] + AMP + H(+). The catalysed reaction is N(tele)-phospho-L-histidyl/O-phospho-L-threonyl-[pyruvate, phosphate dikinase] + phosphate + H(+) = N(tele)-phospho-L-histidyl/L-threonyl-[pyruvate, phosphate dikinase] + diphosphate. Its function is as follows. Bifunctional serine/threonine kinase and phosphorylase involved in the regulation of the pyruvate, phosphate dikinase (PPDK) by catalyzing its phosphorylation/dephosphorylation. In Chloroflexus aurantiacus (strain ATCC 29366 / DSM 635 / J-10-fl), this protein is Putative pyruvate, phosphate dikinase regulatory protein.